Here is a 487-residue protein sequence, read N- to C-terminus: Bifunctional protein GlmU (487 aa).

Positions 1-232 are pyrophosphorylase; that stretch reads MAVIVLAAGA…AAELAGVNDR (232 aa). UDP-N-acetyl-alpha-D-glucosamine contacts are provided by residues 6-9, Lys20, Gln77, and 82-83; these read LAAG and GT. Asp107 is a binding site for Mg(2+). The UDP-N-acetyl-alpha-D-glucosamine site is built by Gly142, Glu157, Asn172, and Asn230. Asn230 serves as a coordination point for Mg(2+). The linker stretch occupies residues 233–253; it reads VQLAAAGAELNRRTVTAAMRG. Residues 254-487 are N-acetyltransferase; that stretch reads GATIVDPATT…PTSTPQADQE (234 aa). The UDP-N-acetyl-alpha-D-glucosamine site is built by Arg335 and Lys353. His365 serves as the catalytic Proton acceptor. Residues Tyr368 and Asn379 each coordinate UDP-N-acetyl-alpha-D-glucosamine. Acetyl-CoA-binding positions include Ala382, 388-389, Ser407, and Ala425; that span reads NY. Residues 453–487 are disordered; sequence AKKRPGTPAAEAGEAAAKRVAEGGSPTSTPQADQE. Polar residues predominate over residues 477–487; the sequence is SPTSTPQADQE.

This sequence in the N-terminal section; belongs to the N-acetylglucosamine-1-phosphate uridyltransferase family. The protein in the C-terminal section; belongs to the transferase hexapeptide repeat family. Homotrimer. Mg(2+) is required as a cofactor.

It localises to the cytoplasm. It carries out the reaction alpha-D-glucosamine 1-phosphate + acetyl-CoA = N-acetyl-alpha-D-glucosamine 1-phosphate + CoA + H(+). It catalyses the reaction N-acetyl-alpha-D-glucosamine 1-phosphate + UTP + H(+) = UDP-N-acetyl-alpha-D-glucosamine + diphosphate. Its pathway is nucleotide-sugar biosynthesis; UDP-N-acetyl-alpha-D-glucosamine biosynthesis; N-acetyl-alpha-D-glucosamine 1-phosphate from alpha-D-glucosamine 6-phosphate (route II): step 2/2. The protein operates within nucleotide-sugar biosynthesis; UDP-N-acetyl-alpha-D-glucosamine biosynthesis; UDP-N-acetyl-alpha-D-glucosamine from N-acetyl-alpha-D-glucosamine 1-phosphate: step 1/1. It participates in bacterial outer membrane biogenesis; LPS lipid A biosynthesis. In terms of biological role, catalyzes the last two sequential reactions in the de novo biosynthetic pathway for UDP-N-acetylglucosamine (UDP-GlcNAc). The C-terminal domain catalyzes the transfer of acetyl group from acetyl coenzyme A to glucosamine-1-phosphate (GlcN-1-P) to produce N-acetylglucosamine-1-phosphate (GlcNAc-1-P), which is converted into UDP-GlcNAc by the transfer of uridine 5-monophosphate (from uridine 5-triphosphate), a reaction catalyzed by the N-terminal domain. The protein is Bifunctional protein GlmU of Corynebacterium jeikeium (strain K411).